Here is a 355-residue protein sequence, read N- to C-terminus: Myosin-binding protein H-like (355 aa).

Polar residues-rich tracts occupy residues Met-1–Gln-16 and Thr-31–Ser-41. The segment at Met-1–Ser-41 is disordered. Ser-39 is modified (phosphoserine). An Ig-like C2-type 1 domain is found at Pro-46–Asn-140. One can recognise a Fibronectin type-III domain in the interval Pro-149–Ala-244. Residues Pro-262 to Asp-346 enclose the Ig-like C2-type 2 domain. Cys-283 and Cys-334 are disulfide-bonded. Arg-322 bears the Omega-N-methylarginine mark.

The protein belongs to the immunoglobulin superfamily. MyBP family. As to expression, expressed in the atria as well as in discrete puncta throughout the right ventricular wall and septum.

It localises to the cytoplasm. The protein localises to the myofibril. The protein resides in the sarcomere. Functionally, myosin-binding protein which plays a role in cardiac function. Seems to regulate conduction in the atria and ventricular conduction systems. The protein is Myosin-binding protein H-like of Mus musculus (Mouse).